Reading from the N-terminus, the 407-residue chain is Putative glucose/galactose transporter (407 aa).

12 helical membrane-spanning segments follow: residues 11–31, 47–67, 70–90, 96–116, 139–159, 180–200, 225–245, 263–283, 300–320, 321–341, 349–369, and 378–398; these read GSLTALFFLMGFITVLNDILI, LIQFCFFGAYFIMGGVFGNVI, IGYPFGVVLGFVITASGCALF, FGSYGFFLGALFILASGIVCL, VQAFNSLGTTLGPIFGSLLIF, VQMPYLGLAVFSLLLALVMYL, FVFGALGIFFYVGGEVAIGSF, HYLVYYWGGAMVGRFLGSALM, IILIALAILIGGKIALFALTF, VGFFNSIMFPTIFSLATLNLG, GVISMAIVGGALIPPIQGVVT, and NLLYAYSVPLLCYFYILFFAL.

The protein belongs to the major facilitator superfamily. FHS transporter (TC 2.A.1.7) family.

The protein localises to the cell inner membrane. Intake of glucose and galactose. This is Putative glucose/galactose transporter (gluP) from Helicobacter pylori (strain J99 / ATCC 700824) (Campylobacter pylori J99).